Reading from the N-terminus, the 513-residue chain is Activin receptor type-2A (513 aa).

An N-terminal signal peptide occupies residues 1–19 (MGAATKLAFAVFLISCSSG). At 20–139 (AILGRSETQE…VTPKPPLFNT (120 aa)) the chain is on the extracellular side. 5 cysteine pairs are disulfide-bonded: Cys30–Cys60, Cys50–Cys78, Cys85–Cys104, Cys91–Cys103, and Cys105–Cys110. Residues Asn43 and Asn66 are each glycosylated (N-linked (GlcNAc...) asparagine). Residues 140 to 160 (LLYSLVPIMGIAVIVLFSFWM) form a helical membrane-spanning segment. The Cytoplasmic portion of the chain corresponds to 161–513 (YRHHKLAYPP…VDFPPKESSL (353 aa)). The region spanning 192 to 485 (LQLLEIKARG…EERIIQMQKL (294 aa)) is the Protein kinase domain. ATP is bound by residues 198–206 (KARGRFGCV) and Lys219. Asp322 acts as the Proton acceptor in catalysis.

Belongs to the protein kinase superfamily. TKL Ser/Thr protein kinase family. TGFB receptor subfamily. Mg(2+) serves as cofactor. Mn(2+) is required as a cofactor. As to expression, expressed in hen anterior pituitary during the ovulatory cycle and in the ovarian follicle.

The protein resides in the cell membrane. It catalyses the reaction L-threonyl-[receptor-protein] + ATP = O-phospho-L-threonyl-[receptor-protein] + ADP + H(+). It carries out the reaction L-seryl-[receptor-protein] + ATP = O-phospho-L-seryl-[receptor-protein] + ADP + H(+). Functionally, on ligand binding, forms a receptor complex consisting of two type II and two type I transmembrane serine/threonine kinases. Type II receptors phosphorylate and activate type I receptors which autophosphorylate, then bind and activate SMAD transcriptional regulators. Receptor for activin A, activin B and inhibin A. May modulate neuropeptide expression in dorsal root ganglia (DRG) neurons and ovarian follicle development. The protein is Activin receptor type-2A (ACVR2A) of Gallus gallus (Chicken).